The chain runs to 463 residues: L-seryl-tRNA(Sec) selenium transferase (463 aa).

An N6-(pyridoxal phosphate)lysine modification is found at lysine 295.

It belongs to the SelA family. In terms of assembly, homodecamer; pentamer of dimers. Binds only one seryl-tRNA(Sec) per dimer. Requires pyridoxal 5'-phosphate as cofactor.

It localises to the cytoplasm. The enzyme catalyses L-seryl-tRNA(Sec) + selenophosphate + H(+) = L-selenocysteinyl-tRNA(Sec) + phosphate. Its pathway is aminoacyl-tRNA biosynthesis; selenocysteinyl-tRNA(Sec) biosynthesis; selenocysteinyl-tRNA(Sec) from L-seryl-tRNA(Sec) (bacterial route): step 1/1. Its function is as follows. Converts seryl-tRNA(Sec) to selenocysteinyl-tRNA(Sec) required for selenoprotein biosynthesis. The polypeptide is L-seryl-tRNA(Sec) selenium transferase (Shigella flexneri).